Reading from the N-terminus, the 505-residue chain is Maturase K (505 aa).

The protein belongs to the intron maturase 2 family. MatK subfamily.

Its subcellular location is the plastid. It localises to the chloroplast. Usually encoded in the trnK tRNA gene intron. Probably assists in splicing its own and other chloroplast group II introns. The sequence is that of Maturase K from Elaeagnus umbellata (Autumn olive).